Here is a 419-residue protein sequence, read N- to C-terminus: 3-isopropylmalate dehydratase large subunit (419 aa).

[4Fe-4S] cluster-binding residues include Cys-300, Cys-360, and Cys-363.

The protein belongs to the aconitase/IPM isomerase family. LeuC type 2 subfamily. Heterodimer of LeuC and LeuD. [4Fe-4S] cluster is required as a cofactor.

It carries out the reaction (2R,3S)-3-isopropylmalate = (2S)-2-isopropylmalate. The protein operates within amino-acid biosynthesis; L-leucine biosynthesis; L-leucine from 3-methyl-2-oxobutanoate: step 2/4. Its function is as follows. Catalyzes the isomerization between 2-isopropylmalate and 3-isopropylmalate, via the formation of 2-isopropylmaleate. The polypeptide is 3-isopropylmalate dehydratase large subunit (Desulfatibacillum aliphaticivorans).